The following is a 129-amino-acid chain: Small ribosomal subunit protein uS11 (129 aa).

This sequence belongs to the universal ribosomal protein uS11 family. In terms of assembly, part of the 30S ribosomal subunit. Interacts with proteins S7 and S18. Binds to IF-3.

In terms of biological role, located on the platform of the 30S subunit, it bridges several disparate RNA helices of the 16S rRNA. Forms part of the Shine-Dalgarno cleft in the 70S ribosome. In Macrococcus caseolyticus (strain JCSC5402) (Macrococcoides caseolyticum), this protein is Small ribosomal subunit protein uS11.